A 160-amino-acid polypeptide reads, in one-letter code: Aspartate carbamoyltransferase regulatory chain (160 aa).

Residues Cys-110, Cys-115, Cys-140, and Cys-143 each contribute to the Zn(2+) site.

This sequence belongs to the PyrI family. Contains catalytic and regulatory chains. The cofactor is Zn(2+).

In terms of biological role, involved in allosteric regulation of aspartate carbamoyltransferase. In Hyperthermus butylicus (strain DSM 5456 / JCM 9403 / PLM1-5), this protein is Aspartate carbamoyltransferase regulatory chain.